The primary structure comprises 324 residues: Acetyl-coenzyme A carboxylase carboxyl transferase subunit alpha (324 aa).

The region spanning 41 to 291 is the CoA carboxyltransferase C-terminal domain; it reads RLDRLKEKIY…QEYVLQEWLK (251 aa).

The protein belongs to the AccA family. Acetyl-CoA carboxylase is a heterohexamer composed of biotin carboxyl carrier protein (AccB), biotin carboxylase (AccC) and two subunits each of ACCase subunit alpha (AccA) and ACCase subunit beta (AccD).

Its subcellular location is the cytoplasm. It carries out the reaction N(6)-carboxybiotinyl-L-lysyl-[protein] + acetyl-CoA = N(6)-biotinyl-L-lysyl-[protein] + malonyl-CoA. Its pathway is lipid metabolism; malonyl-CoA biosynthesis; malonyl-CoA from acetyl-CoA: step 1/1. In terms of biological role, component of the acetyl coenzyme A carboxylase (ACC) complex. First, biotin carboxylase catalyzes the carboxylation of biotin on its carrier protein (BCCP) and then the CO(2) group is transferred by the carboxyltransferase to acetyl-CoA to form malonyl-CoA. The chain is Acetyl-coenzyme A carboxylase carboxyl transferase subunit alpha from Chlamydia muridarum (strain MoPn / Nigg).